The following is a 234-amino-acid chain: Large ribosomal subunit protein uL1 (234 aa).

It belongs to the universal ribosomal protein uL1 family. As to quaternary structure, part of the 50S ribosomal subunit.

Functionally, binds directly to 23S rRNA. The L1 stalk is quite mobile in the ribosome, and is involved in E site tRNA release. In terms of biological role, protein L1 is also a translational repressor protein, it controls the translation of the L11 operon by binding to its mRNA. The polypeptide is Large ribosomal subunit protein uL1 (Salmonella gallinarum (strain 287/91 / NCTC 13346)).